The primary structure comprises 88 residues: Elongation factor 1-beta (88 aa).

The protein belongs to the EF-1-beta/EF-1-delta family.

Promotes the exchange of GDP for GTP in EF-1-alpha/GDP, thus allowing the regeneration of EF-1-alpha/GTP that could then be used to form the ternary complex EF-1-alpha/GTP/AAtRNA. The sequence is that of Elongation factor 1-beta from Halorubrum lacusprofundi (strain ATCC 49239 / DSM 5036 / JCM 8891 / ACAM 34).